The primary structure comprises 269 residues: Tryptophan synthase alpha chain (269 aa).

Active-site proton acceptor residues include glutamate 49 and aspartate 60.

Belongs to the TrpA family. Tetramer of two alpha and two beta chains.

The enzyme catalyses (1S,2R)-1-C-(indol-3-yl)glycerol 3-phosphate + L-serine = D-glyceraldehyde 3-phosphate + L-tryptophan + H2O. The protein operates within amino-acid biosynthesis; L-tryptophan biosynthesis; L-tryptophan from chorismate: step 5/5. In terms of biological role, the alpha subunit is responsible for the aldol cleavage of indoleglycerol phosphate to indole and glyceraldehyde 3-phosphate. This Pseudomonas putida (strain ATCC 47054 / DSM 6125 / CFBP 8728 / NCIMB 11950 / KT2440) protein is Tryptophan synthase alpha chain.